The primary structure comprises 852 residues: Ubiquitin carboxyl-terminal hydrolase 4 (852 aa).

The 125-residue stretch at 172–296 folds into the Rhodanese domain; that stretch reads ASGTVLLVDV…WSNAHPDFCV (125 aa). The interval 369–393 is disordered; it reads RSSSSSSNINERPGSVPPQLSNGST. The USP domain maps to 488–849; sequence VGLVNCGNSC…NAYVLFYHRI (362 aa). C497 serves as the catalytic Nucleophile. H806 acts as the Proton acceptor in catalysis.

This sequence belongs to the peptidase C19 family.

The protein resides in the cytoplasm. Its subcellular location is the late endosome membrane. It catalyses the reaction Thiol-dependent hydrolysis of ester, thioester, amide, peptide and isopeptide bonds formed by the C-terminal Gly of ubiquitin (a 76-residue protein attached to proteins as an intracellular targeting signal).. With respect to regulation, RFU1 is an inhibitor of deubiquitination activity. In terms of biological role, ubiquitin thioesterase that acts at the late endosome/prevacuolar compartment to recover ubiquitin from ubiquitinated membrane proteins en route to the vacuole. Also removes ubiquitin from soluble proteins targeted to proteasomes. Is essential to maintain a normal level of free ubiquitin. Required for promoting coordination of DNA replication and avoids DNA overreplication. The polypeptide is Ubiquitin carboxyl-terminal hydrolase 4 (DOA4) (Eremothecium gossypii (strain ATCC 10895 / CBS 109.51 / FGSC 9923 / NRRL Y-1056) (Yeast)).